A 469-amino-acid chain; its full sequence is Siroheme synthase (469 aa).

The interval M1 to L203 is precorrin-2 dehydrogenase /sirohydrochlorin ferrochelatase. Residues D22 to V23 and P43 to V44 contribute to the NAD(+) site. Position 128 is a phosphoserine (S128). Positions G214 to A469 are uroporphyrinogen-III C-methyltransferase. P223 serves as a coordination point for S-adenosyl-L-methionine. Catalysis depends on D246, which acts as the Proton acceptor. Residue K268 is the Proton donor of the active site. Residues G299 to D301, V304, T329 to A330, M381, and G410 each bind S-adenosyl-L-methionine.

In the N-terminal section; belongs to the precorrin-2 dehydrogenase / sirohydrochlorin ferrochelatase family. The protein in the C-terminal section; belongs to the precorrin methyltransferase family.

The catalysed reaction is uroporphyrinogen III + 2 S-adenosyl-L-methionine = precorrin-2 + 2 S-adenosyl-L-homocysteine + H(+). It catalyses the reaction precorrin-2 + NAD(+) = sirohydrochlorin + NADH + 2 H(+). It carries out the reaction siroheme + 2 H(+) = sirohydrochlorin + Fe(2+). The protein operates within cofactor biosynthesis; adenosylcobalamin biosynthesis; precorrin-2 from uroporphyrinogen III: step 1/1. Its pathway is cofactor biosynthesis; adenosylcobalamin biosynthesis; sirohydrochlorin from precorrin-2: step 1/1. It functions in the pathway porphyrin-containing compound metabolism; siroheme biosynthesis; precorrin-2 from uroporphyrinogen III: step 1/1. It participates in porphyrin-containing compound metabolism; siroheme biosynthesis; siroheme from sirohydrochlorin: step 1/1. The protein operates within porphyrin-containing compound metabolism; siroheme biosynthesis; sirohydrochlorin from precorrin-2: step 1/1. In terms of biological role, multifunctional enzyme that catalyzes the SAM-dependent methylations of uroporphyrinogen III at position C-2 and C-7 to form precorrin-2 via precorrin-1. Then it catalyzes the NAD-dependent ring dehydrogenation of precorrin-2 to yield sirohydrochlorin. Finally, it catalyzes the ferrochelation of sirohydrochlorin to yield siroheme. The sequence is that of Siroheme synthase from Photobacterium profundum (strain SS9).